Here is an 820-residue protein sequence, read N- to C-terminus: Chitinase A (820 aa).

The first 21 residues, 1 to 21 (MKLNKITSYIGFALLSGGALA), serve as a signal peptide directing secretion. Residues 158–588 (RVTGAYFVEW…NAMYDGLTAG (431 aa)) enclose the GH18 domain. Residue Glu313 is the Proton donor of the active site.

The protein belongs to the glycosyl hydrolase 18 family. Chitinase class II subfamily.

The enzyme catalyses Random endo-hydrolysis of N-acetyl-beta-D-glucosaminide (1-&gt;4)-beta-linkages in chitin and chitodextrins.. Stimulated by magnesium ions; inhibited by N-bromosuccinimide and 2-hydroxy-5-nitrobenzyl bromide. This is Chitinase A (chiA) from Pseudoalteromonas piscicida.